Consider the following 145-residue polypeptide: Photosystem I reaction center subunit VI-2, chloroplastic (145 aa).

Residues 1-50 (MASFATIAAVQPSAAVKGLGGSSLAGAKLFIKPSRQSFKTKSTRAGAVVA) constitute a chloroplast transit peptide. The chain crosses the membrane as a helical span at residues 102-118 (LLLKFLILGGGSLLTYV). Residues 126–145 (VLPIKRGPQEPPKLGPRGKL) form a disordered region.

The protein belongs to the psaH family.

It is found in the plastid. Its subcellular location is the chloroplast thylakoid membrane. Functionally, possible role could be the docking of the LHC I antenna complex to the core complex. The protein is Photosystem I reaction center subunit VI-2, chloroplastic (PSAH2) of Arabidopsis thaliana (Mouse-ear cress).